The following is a 121-amino-acid chain: Large ribosomal subunit protein bL20 (121 aa).

It belongs to the bacterial ribosomal protein bL20 family.

Binds directly to 23S ribosomal RNA and is necessary for the in vitro assembly process of the 50S ribosomal subunit. It is not involved in the protein synthesizing functions of that subunit. The protein is Large ribosomal subunit protein bL20 of Orientia tsutsugamushi (strain Boryong) (Rickettsia tsutsugamushi).